The following is a 244-amino-acid chain: Phosphoadenosine 5'-phosphosulfate reductase (244 aa).

Cysteine 239 serves as the catalytic Nucleophile; cysteine thiosulfonate intermediate.

This sequence belongs to the PAPS reductase family. CysH subfamily.

It localises to the cytoplasm. The enzyme catalyses [thioredoxin]-disulfide + sulfite + adenosine 3',5'-bisphosphate + 2 H(+) = [thioredoxin]-dithiol + 3'-phosphoadenylyl sulfate. The protein operates within sulfur metabolism; hydrogen sulfide biosynthesis; sulfite from sulfate: step 3/3. Functionally, catalyzes the formation of sulfite from phosphoadenosine 5'-phosphosulfate (PAPS) using thioredoxin as an electron donor. This is Phosphoadenosine 5'-phosphosulfate reductase from Shigella flexneri serotype 5b (strain 8401).